Here is a 243-residue protein sequence, read N- to C-terminus: Probable transcriptional regulatory protein BAPKO_0024/BafPKo_0025 (243 aa).

Belongs to the TACO1 family.

It localises to the cytoplasm. The polypeptide is Probable transcriptional regulatory protein BAPKO_0024/BafPKo_0025 (Borreliella afzelii (strain PKo) (Borrelia afzelii)).